Consider the following 339-residue polypeptide: Anthranilate phosphoribosyltransferase (339 aa).

Residues glycine 80, 83–84, threonine 88, 90–93, 108–116, and serine 120 contribute to the 5-phospho-alpha-D-ribose 1-diphosphate site; these read GD, NIST, and KHGNRSVSS. An anthranilate-binding site is contributed by glycine 80. Residue serine 92 coordinates Mg(2+). Asparagine 111 is an anthranilate binding site. Arginine 166 contacts anthranilate. Positions 225 and 226 each coordinate Mg(2+).

The protein belongs to the anthranilate phosphoribosyltransferase family. As to quaternary structure, homodimer. Requires Mg(2+) as cofactor.

It catalyses the reaction N-(5-phospho-beta-D-ribosyl)anthranilate + diphosphate = 5-phospho-alpha-D-ribose 1-diphosphate + anthranilate. Its pathway is amino-acid biosynthesis; L-tryptophan biosynthesis; L-tryptophan from chorismate: step 2/5. Its function is as follows. Catalyzes the transfer of the phosphoribosyl group of 5-phosphorylribose-1-pyrophosphate (PRPP) to anthranilate to yield N-(5'-phosphoribosyl)-anthranilate (PRA). The protein is Anthranilate phosphoribosyltransferase of Alkaliphilus metalliredigens (strain QYMF).